The following is a 526-amino-acid chain: MDNESQYSGYSYKSSHSRSSRKHRDRRDRHRSKSRDSSSRGDKSVTIQAPGEPLLDAESTRGDDRDDNWGETTTVVTGTSEHSVSNEDLTRASKELEDSSPLECRRFAGPIVSGVLGLFALLTPLAFLLLPQLLWRDSLEPCGTPCEGLYVSLAFKLLVLLISSWALFLRPSRSTLPRFFVFRCLLMALVFLFVASYWLFYGVRVLEPRERDYRGIVGYAVSLVDALLFIQYLALVLLEVRHLRPAFCLKVVRTTDGASRFYNVGHLSIQRAAVWVLDHYYTDFPVYNPALLNLPKSILSKKMSGFKVYSLGEENSTNNSTGQSRAMIAAAARRRDNSHNEYYYEEAEMDRRVRKRKARLVVAVEEAFTHIKRLQDDEAAASPKHPREVMDPREAAQAIFAPMARAMQKYLRTTRQQPYHSMESIISHLQFCITHNMTPKAFLERYLTPGPTMQYQRENGRGRQWTLVSEEPVTAALRQGLVFSLRRLDFALVVTVTPLPFLNLGEEFIDPKSHKFVMRLQSETSV.

The segment at 1-95 is disordered; the sequence is MDNESQYSGY…NEDLTRASKE (95 aa). Over 1 to 109 the chain is Cytoplasmic; it reads MDNESQYSGY…SPLECRRFAG (109 aa). The segment covering 15 to 33 has biased composition (basic residues); it reads SHSRSSRKHRDRRDRHRSK. Basic and acidic residues-rich tracts occupy residues 34 to 43 and 58 to 68; these read SRDSSSRGDK and ESTRGDDRDDN. The span at 70 to 83 shows a compositional bias: low complexity; sequence GETTTVVTGTSEHS. Positions 84-95 are enriched in basic and acidic residues; that stretch reads VSNEDLTRASKE. The chain crosses the membrane as a helical span at residues 110-130; that stretch reads PIVSGVLGLFALLTPLAFLLL. The Extracellular segment spans residues 131–148; the sequence is PQLLWRDSLEPCGTPCEG. Residues 149–169 traverse the membrane as a helical segment; that stretch reads LYVSLAFKLLVLLISSWALFL. Topologically, residues 170 to 178 are cytoplasmic; it reads RPSRSTLPR. Residues 179 to 199 traverse the membrane as a helical segment; the sequence is FFVFRCLLMALVFLFVASYWL. The Extracellular portion of the chain corresponds to 200-215; that stretch reads FYGVRVLEPRERDYRG. A helical membrane pass occupies residues 216–236; the sequence is IVGYAVSLVDALLFIQYLALV. Over 237–526 the chain is Cytoplasmic; it reads LLEVRHLRPA…VMRLQSETSV (290 aa). The short motif at 523 to 526 is the PDZ-binding element; the sequence is ETSV.

The protein belongs to the Vang family. Interacts with the PDZ domain of dvl2/dsh. In terms of tissue distribution, ubiquitously expressed at the 4-cell stage. In early somitogenesis, becomes more abundant in anterior neural tissue where expression is seen in the neural tube but not in the notochord.

It is found in the cell membrane. In terms of biological role, plays a role in non-canonical Wnt/planar cell polarity (PCP) signaling to regulate convergent extension cell movements during gastrulation. Acts together with scrib and prickle1 and localizes prickle1 and dvl2/dsh to the plasma membrane. Has an overlapping role with kny during both convergent extension and eye development. In the eye, involved in establishing proper alignment of the anterior neural plate and midline cells expressing shha and shhb/twhh. Has indirect effects on a number of other developmental processes including notochord shape formation, neural progenitor cell morphogenesis, segregation of somites and adaxial cell development. Together with prickle1, required for the posterior (caudal) movement of branchiomotor neurons in the hindbrain independently of, and a few hours after, convergent extension. May be required for cell surface localization of fzd3 and fzd6 in the inner ear. The sequence is that of Vang-like protein 2 from Danio rerio (Zebrafish).